The primary structure comprises 274 residues: Putative pyruvate, phosphate dikinase regulatory protein (274 aa).

An ADP-binding site is contributed by 149–156; it reads GVSRSSKT.

The protein belongs to the pyruvate, phosphate/water dikinase regulatory protein family. PDRP subfamily.

It carries out the reaction N(tele)-phospho-L-histidyl/L-threonyl-[pyruvate, phosphate dikinase] + ADP = N(tele)-phospho-L-histidyl/O-phospho-L-threonyl-[pyruvate, phosphate dikinase] + AMP + H(+). The enzyme catalyses N(tele)-phospho-L-histidyl/O-phospho-L-threonyl-[pyruvate, phosphate dikinase] + phosphate + H(+) = N(tele)-phospho-L-histidyl/L-threonyl-[pyruvate, phosphate dikinase] + diphosphate. In terms of biological role, bifunctional serine/threonine kinase and phosphorylase involved in the regulation of the pyruvate, phosphate dikinase (PPDK) by catalyzing its phosphorylation/dephosphorylation. This is Putative pyruvate, phosphate dikinase regulatory protein from Rhizorhabdus wittichii (strain DSM 6014 / CCUG 31198 / JCM 15750 / NBRC 105917 / EY 4224 / RW1) (Sphingomonas wittichii).